The chain runs to 324 residues: Mating-type protein A-3 (324 aa).

The segment at residues 147–215 (TSRPRNQFVL…RHRAENPHLY (69 aa)) is a DNA-binding region (HMG box).

The protein resides in the nucleus. Required, together with mating-type protein A-2, for efficient ascospore formation. This is Mating-type protein A-3 (mtA-3) from Neurospora crassa (strain ATCC 24698 / 74-OR23-1A / CBS 708.71 / DSM 1257 / FGSC 987).